The chain runs to 334 residues: Protein-methionine-sulfoxide reductase catalytic subunit MsrP (334 aa).

Positions 1–44 (MKKNQFLKESDVTAESVFFMKRRQVLKALGISAAALSLPHAAHA) form a signal peptide, tat-type signal. Mo-molybdopterin-binding positions include N88, 91–92 (YE), C146, T181, N233, R238, and 249–251 (GIK).

It belongs to the MsrP family. As to quaternary structure, heterodimer of a catalytic subunit (MsrP) and a heme-binding subunit (MsrQ). Mo-molybdopterin serves as cofactor. In terms of processing, predicted to be exported by the Tat system. The position of the signal peptide cleavage has not been experimentally proven.

Its subcellular location is the periplasm. The catalysed reaction is L-methionyl-[protein] + a quinone + H2O = L-methionyl-(S)-S-oxide-[protein] + a quinol. It catalyses the reaction L-methionyl-[protein] + a quinone + H2O = L-methionyl-(R)-S-oxide-[protein] + a quinol. Part of the MsrPQ system that repairs oxidized periplasmic proteins containing methionine sulfoxide residues (Met-O), using respiratory chain electrons. Thus protects these proteins from oxidative-stress damage caused by reactive species of oxygen and chlorine generated by the host defense mechanisms. MsrPQ is essential for the maintenance of envelope integrity under bleach stress, rescuing a wide series of structurally unrelated periplasmic proteins from methionine oxidation, including the primary periplasmic chaperone SurA and the lipoprotein Pal. The catalytic subunit MsrP is non-stereospecific, being able to reduce both (R-) and (S-) diastereoisomers of methionine sulfoxide. The chain is Protein-methionine-sulfoxide reductase catalytic subunit MsrP from Escherichia coli (strain UTI89 / UPEC).